The chain runs to 221 residues: Translation initiation factor 6 (221 aa).

This sequence belongs to the eIF-6 family.

Functionally, binds to the 50S ribosomal subunit and prevents its association with the 30S ribosomal subunit to form the 70S initiation complex. The protein is Translation initiation factor 6 of Methanopyrus kandleri (strain AV19 / DSM 6324 / JCM 9639 / NBRC 100938).